The following is a 377-amino-acid chain: MRFLPCIATLAATASALAIGDHVRSDDQYVLELAPGQTKVVTEAEKWALRAEGKRFFDITERASSLELASNKKQKLAVTYPDSVQHNETVQNLIKSLDKKNFETVLQPFSEFHNRYYKSDNGKKSSEWLQGKIQEIISASGAKGVTVEPFKHSFPQSSLIAKIPGKSDKTIVLGAHQDSINLDSPSEGRAPGADDDGSGVVTILEAFRVLLTDEKVAAGEAPNTVEFHFYAGEEGGLLGSQDIFEQYSQKSRDVKAMLQQDMTGYTKGTTDAGKPESIGIITDNVDENLTKFLKVIVDAYCTIPTVDSKCGYGCSDHASATKYGYPAAFAFESAFGDDSPYIHSADDTIETVNFDHVLQHGRLTLGFAYELAFADSL.

An N-terminal signal peptide occupies residues 1-18 (MRFLPCIATLAATASALA). Positions 19-79 (IGDHVRSDDQ…SNKKQKLAVT (61 aa)) are excised as a propeptide. N-linked (GlcNAc...) asparagine glycosylation is present at asparagine 87. Positions 176, 195, 234, and 261 each coordinate Zn(2+). N-linked (GlcNAc...) asparagine glycosylation is present at asparagine 288. Cysteine 310 and cysteine 314 are joined by a disulfide. Histidine 343 lines the Zn(2+) pocket.

It belongs to the peptidase M28 family. M28E subfamily. In terms of assembly, monomer. Requires Zn(2+) as cofactor.

The protein localises to the secreted. Calcium, magnesium and manganese cations reduce peptidase activity to 20.3-51.3 percent. The metal ion chelating reagent EDTA almost completely inhibits activity. The protease inhibitor bacitracin and the aminopeptidase B inhibitor bestatin, as well as DTT and beta-mercaptoethanol act also as lap A inhibitorsD. Functionally, extracellular aminopeptidase that allows assimilation of proteinaceous substrates. This Aspergillus oryzae (strain ATCC 42149 / RIB 40) (Yellow koji mold) protein is Leucine aminopeptidase A (lapA).